Here is a 120-residue protein sequence, read N- to C-terminus: GATA transcription factor 23 (120 aa).

A GATA-type zinc finger spans residues 22-76 (KGTIRCCSECKTTKTPMWRGGPTGPKSLCNACGIRHRKQRRSELLGIHIIRSHKS).

Belongs to the type IV zinc-finger family. Class B subfamily.

Its subcellular location is the nucleus. Its function is as follows. Transcriptional regulator that specifically binds 5'-GATA-3' or 5'-GAT-3' motifs within gene promoters. In Arabidopsis thaliana (Mouse-ear cress), this protein is GATA transcription factor 23 (GATA23).